The following is a 161-amino-acid chain: UPF0763 protein Cla_1130 (161 aa).

The protein belongs to the UPF0763 family.

This chain is UPF0763 protein Cla_1130, found in Campylobacter lari (strain RM2100 / D67 / ATCC BAA-1060).